The primary structure comprises 448 residues: Glutamate--tRNA ligase 1 (448 aa).

The 'HIGH' region signature appears at 9 to 19 (PSPTGKLHIGN). Positions 240–244 (KISKR) match the 'KMSKS' region motif. K243 contributes to the ATP binding site.

It belongs to the class-I aminoacyl-tRNA synthetase family. Glutamate--tRNA ligase type 1 subfamily. In terms of assembly, monomer.

It is found in the cytoplasm. It carries out the reaction tRNA(Glu) + L-glutamate + ATP = L-glutamyl-tRNA(Glu) + AMP + diphosphate. In terms of biological role, catalyzes the attachment of glutamate to tRNA(Glu) in a two-step reaction: glutamate is first activated by ATP to form Glu-AMP and then transferred to the acceptor end of tRNA(Glu). The protein is Glutamate--tRNA ligase 1 of Orientia tsutsugamushi (strain Ikeda) (Rickettsia tsutsugamushi).